We begin with the raw amino-acid sequence, 236 residues long: Phycocyanobilin:ferredoxin oxidoreductase (236 aa).

Belongs to the HY2 family.

It carries out the reaction (2R,3Z)-phycocyanobilin + 4 oxidized [2Fe-2S]-[ferredoxin] = biliverdin IXalpha + 4 reduced [2Fe-2S]-[ferredoxin] + 4 H(+). Its function is as follows. Catalyzes the four-electron reduction of biliverdin IX-alpha (2-electron reduction at both the A and D rings); the reaction proceeds via an isolatable 2-electron intermediate, 181,182-dihydrobiliverdin. The polypeptide is Phycocyanobilin:ferredoxin oxidoreductase (pcyA) (Thermosynechococcus vestitus (strain NIES-2133 / IAM M-273 / BP-1)).